A 601-amino-acid chain; its full sequence is Sulfite reductase [NADPH] flavoprotein alpha-component (601 aa).

Residues 64 to 202 (ITLISASQTG…SAQQWRQQIV (139 aa)) form the Flavodoxin-like domain. FMN is bound by residues 70–75 (SQTGNA), 117–120 (STQG), and 153–162 (LGDTSYEHFC). In terms of domain architecture, FAD-binding FR-type spans 236–450 (AAPLTAQLSV…IEHNDNFRLP (215 aa)). FAD-binding positions include Thr-324, Lys-358, 388–391 (RLYS), 406–408 (TVG), Tyr-412, and 421–424 (GGAS). Residues 521–522 (SR), 527–531 (KIYVQ), and Asp-563 contribute to the NADP(+) site. Position 601 (Tyr-601) interacts with FAD.

This sequence belongs to the NADPH-dependent sulphite reductase flavoprotein subunit CysJ family. In the N-terminal section; belongs to the flavodoxin family. The protein in the C-terminal section; belongs to the flavoprotein pyridine nucleotide cytochrome reductase family. In terms of assembly, alpha(8)-beta(8). The alpha component is a flavoprotein, the beta component is a hemoprotein. Requires FAD as cofactor. FMN is required as a cofactor.

The catalysed reaction is hydrogen sulfide + 3 NADP(+) + 3 H2O = sulfite + 3 NADPH + 4 H(+). The protein operates within sulfur metabolism; hydrogen sulfide biosynthesis; hydrogen sulfide from sulfite (NADPH route): step 1/1. Functionally, component of the sulfite reductase complex that catalyzes the 6-electron reduction of sulfite to sulfide. This is one of several activities required for the biosynthesis of L-cysteine from sulfate. The flavoprotein component catalyzes the electron flow from NADPH -&gt; FAD -&gt; FMN to the hemoprotein component. This Yersinia enterocolitica serotype O:8 / biotype 1B (strain NCTC 13174 / 8081) protein is Sulfite reductase [NADPH] flavoprotein alpha-component.